Reading from the N-terminus, the 855-residue chain is Probable inactive ATP-dependent zinc metalloprotease FTSHI 4, chloroplastic (855 aa).

Residues 1–78 (MTFYISSSLT…SFESTESSVS (78 aa)) constitute a chloroplast transit peptide. A helical transmembrane segment spans residues 242-262 (VATFVVWSMRLALFVSLYVWI). An ATP-binding site is contributed by 356 to 363 (GPPGTGKT).

It belongs to the AAA ATPase family. In terms of assembly, homooligomer. Interacts with FtsHi2. Ubiquitous but preferentially expressed in young leaves.

The protein resides in the plastid. It is found in the chloroplast thylakoid membrane. Functions in chloroplast biogenesis and chloroplast division. Required for plastid development during embryogenesis. Might be involved in chaperone functions or play a structural role in the thylakoid FtsH complex. The protein is Probable inactive ATP-dependent zinc metalloprotease FTSHI 4, chloroplastic of Arabidopsis thaliana (Mouse-ear cress).